A 417-amino-acid chain; its full sequence is DnaJ protein homolog ANJ1 (417 aa).

The J domain occupies 11 to 76; the sequence is STRYYEILGV…REIYDQYGED (66 aa). The CR-type zinc finger occupies 135 to 219; that stretch reads GTTKKLSLSR…CKGEKVVQEK (85 aa). 3 CXXCXGXG motif repeats span residues 148 to 155, 164 to 171, and 191 to 198; these read CSKCTGKG, CSGCQGTG, and CNECKGTG. Residues 207 to 214 form a CXXCXGXG motif; approximate repeat; it reads CPQCKGEK. The disordered stretch occupies residues 384–417; it reads IEEEMKRKQTQAQQEAYDEDDEPAGGQRVQCAQQ. Cysteine 414 bears the Cysteine methyl ester mark. Cysteine 414 carries S-farnesyl cysteine lipidation. A propeptide spans 415–417 (removed in mature form); that stretch reads AQQ.

It localises to the membrane. In terms of biological role, plays a continuous role in plant development probably in the structural organization of compartments. This chain is DnaJ protein homolog ANJ1, found in Atriplex nummularia (Old man saltbush).